The chain runs to 351 residues: Foldase protein PrsA 1 (351 aa).

Positions 1-22 are cleaved as a signal peptide; sequence MKNSNKLIASVVTLASVMALAA. The N-palmitoyl cysteine moiety is linked to residue Cys23. Cys23 is lipidated: S-diacylglycerol cysteine. A PpiC domain is found at 145–240; that stretch reads TPTMAVEMIT…KKFYIVKVTK (96 aa). Composition is skewed to low complexity over residues 303–317 and 326–351; these read KTKA…SESS and ESEQ…PAAQ. Residues 303–351 form a disordered region; the sequence is KTKAASESSTTSESSKAAEENPSESEQTQTSSAEEPTETEAQTQEPAAQ.

Belongs to the PrsA family.

It is found in the cell membrane. The enzyme catalyses [protein]-peptidylproline (omega=180) = [protein]-peptidylproline (omega=0). Its function is as follows. Plays a major role in protein secretion by helping the post-translocational extracellular folding of several secreted proteins. The polypeptide is Foldase protein PrsA 1 (Streptococcus pyogenes serotype M6 (strain ATCC BAA-946 / MGAS10394)).